A 62-amino-acid polypeptide reads, in one-letter code: Teretoxin Tan1.1 (62 aa).

The first 21 residues, 1–21 (MSCFPVLFVMMLLVSQSVWAF), serve as a signal peptide directing secretion. A propeptide spanning residues 22 to 38 (PGPETRDGSVQDAESRR) is cleaved from the precursor.

This sequence belongs to the teretoxin A (TA) superfamily. In terms of processing, contains 2 disulfide bonds. In terms of tissue distribution, expressed by the venom duct.

It localises to the secreted. This is Teretoxin Tan1.1 from Terebra anilis (Auger snail).